Here is a 482-residue protein sequence, read N- to C-terminus: MKFIIKLFPEITIKSQSVRLRFIKILTGNIRNVLKHYDETLAVVRHWDHIEVRAKDENQREAIRDALTRIPGIHHILEVEDHAYTDMHNIFEQALALYRERLEGKTFCVRVKRRGKHEFSSQDVERYVGGGLNQHIETARVNLTAPQITVHLEIEQDRLLLIKSRNEGIGGYPIGTQEDVLSLISGGFDSGVSSYMLMRRGCRVHYCFFNLGGAAHEIGVKQVAHYLWNRFGSSHRVRFVAIDFDPVVGEILEKVDDGQMGVVLKRMMVRAASKIAERYGVQALVTGEALGQVSSQTLTNLRLIDNASDTLILRPLISHDKEHIIKQARELGTEDFAKTMPEYCGVISKSPTVKAVKAKIEAEEGHFDFSILDRVVSEARNIDIREIAEQTSQEVVEVETVASFVPTDVLLDIRAPDEQDDKPLALDQVEIKSLPFYKLGTQFGDLDQSKTYLLYCERGVMSRLQALYLREQGFSNVKVYRP.

In terms of domain architecture, THUMP spans 61-165 (EAIRDALTRI…QDRLLLIKSR (105 aa)). ATP is bound by residues 183 to 184 (LI), Lys-265, Gly-287, and Gln-296. Cys-344 and Cys-456 are disulfide-bonded. The region spanning 404-482 (FVPTDVLLDI…GFSNVKVYRP (79 aa)) is the Rhodanese domain. Catalysis depends on Cys-456, which acts as the Cysteine persulfide intermediate.

This sequence belongs to the ThiI family.

The protein localises to the cytoplasm. It carries out the reaction [ThiI sulfur-carrier protein]-S-sulfanyl-L-cysteine + a uridine in tRNA + 2 reduced [2Fe-2S]-[ferredoxin] + ATP + H(+) = [ThiI sulfur-carrier protein]-L-cysteine + a 4-thiouridine in tRNA + 2 oxidized [2Fe-2S]-[ferredoxin] + AMP + diphosphate. The catalysed reaction is [ThiS sulfur-carrier protein]-C-terminal Gly-Gly-AMP + S-sulfanyl-L-cysteinyl-[cysteine desulfurase] + AH2 = [ThiS sulfur-carrier protein]-C-terminal-Gly-aminoethanethioate + L-cysteinyl-[cysteine desulfurase] + A + AMP + 2 H(+). Its pathway is cofactor biosynthesis; thiamine diphosphate biosynthesis. Functionally, catalyzes the ATP-dependent transfer of a sulfur to tRNA to produce 4-thiouridine in position 8 of tRNAs, which functions as a near-UV photosensor. Also catalyzes the transfer of sulfur to the sulfur carrier protein ThiS, forming ThiS-thiocarboxylate. This is a step in the synthesis of thiazole, in the thiamine biosynthesis pathway. The sulfur is donated as persulfide by IscS. The sequence is that of tRNA sulfurtransferase from Pectobacterium atrosepticum (strain SCRI 1043 / ATCC BAA-672) (Erwinia carotovora subsp. atroseptica).